The following is a 498-amino-acid chain: POU domain protein 2, isoform A (498 aa).

Residues 1–30 (MMVLQQQQQQRLWDATTTSNTNTQTQQSAN) are compositionally biased toward low complexity. A disordered region spans residues 1-35 (MMVLQQQQQQRLWDATTTSNTNTQTQQSANVESTP). Residues Ser-72, Ser-211, Ser-215, Ser-217, and Ser-219 each carry the phosphoserine modification. Residues 191 to 273 (QMKQQQREDP…STPKPTSGLT (83 aa)) form a disordered region. Over residues 207–222 (PLAKSPLRSPSLSPVP) the composition is skewed to low complexity. The span at 228-251 (QQRTPPNSMTANSLGMSSAVMTPN) shows a compositional bias: polar residues. The segment covering 252 to 270 (TPSMQQQPQLQQSTPKPTS) has biased composition (low complexity). In terms of domain architecture, POU-specific spans 286 to 360 (EETTDLEELE…LLQKWLEDAD (75 aa)). Positions 391 to 450 (RRKKRTSIETTVRTTLEKAFLMNCKPTSEEISQLSERLNMDKEVIRVWFCNRRQKEKRIN) form a DNA-binding region, homeobox.

It belongs to the POU transcription factor family. Class-2 subfamily. In terms of tissue distribution, initial expression in cellular blastoderm stage, then in ectodermal stripes during germband extension. Broad expression in the neuroectoderm followed by limitation to discrete subsets of CNS cells, and expression in specific PNS neurons and support cells.

The protein localises to the nucleus. DNA-binding regulatory protein implicated in early development. Involved in neuronal cell fate decision. May act as an octamer-dependent activator of transcription. Could also play an early role in specific ectodermal cells, and a subsequent role in the embryonic nervous system. In Drosophila melanogaster (Fruit fly), this protein is POU domain protein 2, isoform A (pdm2).